The following is a 266-amino-acid chain: Glucosamine-6-phosphate deaminase (266 aa).

D72 functions as the Proton acceptor; for enolization step in the catalytic mechanism. The For ring-opening step role is filled by D141. H143 functions as the Proton acceptor; for ring-opening step in the catalytic mechanism. Residue E148 is the For ring-opening step of the active site.

This sequence belongs to the glucosamine/galactosamine-6-phosphate isomerase family. NagB subfamily. In terms of assembly, homohexamer.

The catalysed reaction is alpha-D-glucosamine 6-phosphate + H2O = beta-D-fructose 6-phosphate + NH4(+). It functions in the pathway amino-sugar metabolism; N-acetylneuraminate degradation; D-fructose 6-phosphate from N-acetylneuraminate: step 5/5. With respect to regulation, allosterically activated by N-acetylglucosamine 6-phosphate (GlcNAc6P). Catalyzes the reversible isomerization-deamination of glucosamine 6-phosphate (GlcN6P) to form fructose 6-phosphate (Fru6P) and ammonium ion. This is Glucosamine-6-phosphate deaminase from Klebsiella pneumoniae subsp. pneumoniae (strain ATCC 700721 / MGH 78578).